We begin with the raw amino-acid sequence, 135 residues long: Ribosome-binding factor A (135 aa).

It belongs to the RbfA family. As to quaternary structure, monomer. Binds 30S ribosomal subunits, but not 50S ribosomal subunits or 70S ribosomes.

Its subcellular location is the cytoplasm. Its function is as follows. One of several proteins that assist in the late maturation steps of the functional core of the 30S ribosomal subunit. Associates with free 30S ribosomal subunits (but not with 30S subunits that are part of 70S ribosomes or polysomes). Required for efficient processing of 16S rRNA. May interact with the 5'-terminal helix region of 16S rRNA. The polypeptide is Ribosome-binding factor A (Hahella chejuensis (strain KCTC 2396)).